The chain runs to 409 residues: MKIYKVGGAVRDRLLGIKVTDIDRVVVGATTEEMLAKGFKPVGADFPVFLDPKNGDEYALARTERKSGRGYGGFVFHASPEVTLEEDLIRRDLTINAMAEDDDGNLTDPYHGLRDLEARILRHVSPAFAEDPLRVLRVARFAARYAHLGFTVAPETLELMRQLSESGELEALTPERSWKEISRALMEDQPQVFIQVLRDCAALKTLMPEVDALFGVPQPEAHHPEIDTGVHTLSVLEQAALHKQPLTVRWACLLHDLGKGTTPVDKLPQHIAHEHRGLKLIKAVNERFKVPRDCQELALLVGQYHTHGHRALELKASTLLELLQSFDVYRRPQRFEEFAIACEMDARGRKGLEQRIYPQADYLRGAAKAAREVAVAPLLEKGYKGPELGEALKRERLKALKAYKEQPIL.

Residues Gly8 and Arg11 each contribute to the ATP site. CTP contacts are provided by Gly8 and Arg11. The Mg(2+) site is built by Asp21 and Asp23. Positions 91, 137, and 140 each coordinate ATP. CTP-binding residues include Arg91, Arg137, and Arg140. The 102-residue stretch at 228-329 (TGVHTLSVLE…LELLQSFDVY (102 aa)) folds into the HD domain.

It belongs to the tRNA nucleotidyltransferase/poly(A) polymerase family. Bacterial CCA-adding enzyme type 1 subfamily. In terms of assembly, monomer. Can also form homodimers and oligomers. The cofactor is Mg(2+). Requires Ni(2+) as cofactor.

The catalysed reaction is a tRNA precursor + 2 CTP + ATP = a tRNA with a 3' CCA end + 3 diphosphate. It carries out the reaction a tRNA with a 3' CCA end + 2 CTP + ATP = a tRNA with a 3' CCACCA end + 3 diphosphate. In terms of biological role, catalyzes the addition and repair of the essential 3'-terminal CCA sequence in tRNAs without using a nucleic acid template. Adds these three nucleotides in the order of C, C, and A to the tRNA nucleotide-73, using CTP and ATP as substrates and producing inorganic pyrophosphate. tRNA 3'-terminal CCA addition is required both for tRNA processing and repair. Also involved in tRNA surveillance by mediating tandem CCA addition to generate a CCACCA at the 3' terminus of unstable tRNAs. While stable tRNAs receive only 3'-terminal CCA, unstable tRNAs are marked with CCACCA and rapidly degraded. This is Multifunctional CCA protein from Pseudomonas fluorescens (strain SBW25).